The sequence spans 232 residues: Platelet-activating factor acetylhydrolase IB subunit alpha1 (232 aa).

Residues 1 to 20 (MSGEGENPASKPTPVQDVQG) are disordered. Position 2 is an N-acetylserine (serine 2). Serine 2 is subject to Phosphoserine. Residues serine 48, aspartate 193, and histidine 196 contribute to the active site.

The protein belongs to the 'GDSL' lipolytic enzyme family. Platelet-activating factor acetylhydrolase IB beta/gamma subunits subfamily. As to quaternary structure, forms a catalytic dimer which is either homodimer (alpha1/alpha1 homodimer) or heterodimer with PAFAH1B2 (alpha1/alpha2 heterodimer). Component of the cytosolic (PAF-AH (I)) heterotetrameric enzyme, which is composed of PAFAH1B1 (beta), PAFAH1B2 (alpha2) and PAFAH1B3 (alpha1) subunits. The catalytic activity of the enzyme resides in the alpha1 (PAFAH1B3) and alpha2 (PAFAH1B2) subunits, whereas the beta subunit (PAFAH1B1) has regulatory activity. Trimer formation is not essential for the catalytic activity. Interacts with VLDLR; this interaction may modulate the Reelin pathway. As to expression, expressed in brain, spleen, lung, liver, kidney and testis. Not expressed in heart and skeletal muscle. Expressed in fetal brain as heterodimer. Not expressed in adult tissues. Expressed exclusively in granule cells.

The protein localises to the cytoplasm. It catalyses the reaction a 1-O-alkyl-2-acetyl-sn-glycero-3-phosphocholine + H2O = a 1-O-alkyl-sn-glycero-3-phosphocholine + acetate + H(+). It carries out the reaction 1-O-hexadecyl-2-acetyl-sn-glycero-3-phosphocholine + H2O = 1-O-hexadecyl-sn-glycero-3-phosphocholine + acetate + H(+). The enzyme catalyses 1-O-hexadecyl-2-acetyl-sn-glycero-3-phosphate + H2O = 1-O-hexadecyl-sn-glycero-3-phosphate + acetate + H(+). With respect to regulation, beta subunit (PAFAH1B1) inhibits the acetylhydrolase activity of the alpha1/alpha1 catalytic homodimer. Its function is as follows. Alpha1 catalytic subunit of the cytosolic type I platelet-activating factor (PAF) acetylhydrolase (PAF-AH (I)) heterotetrameric enzyme that catalyzes the hydrolyze of the acetyl group at the sn-2 position of PAF and its analogs and modulates the action of PAF. The activity and substrate specificity of PAF-AH (I) are affected by its subunit composition. Both alpha1/alpha1 homodimer (PAFAH1B3/PAFAH1B3 homodimer) and alpha1/alpha2 heterodimer(PAFAH1B3/PAFAH1B2 heterodimer) hydrolyze 1-O-alkyl-2-acetyl-sn-glycero-3-phosphoric acid (AAGPA) more efficiently than PAF, but they have little hydrolytic activity towards 1-O-alkyl-2-acetyl-sn-glycero-3-phosphorylethanolamine (AAGPE). Plays an important role during the development of brain. The polypeptide is Platelet-activating factor acetylhydrolase IB subunit alpha1 (Rattus norvegicus (Rat)).